A 247-amino-acid chain; its full sequence is Probable 2-phosphosulfolactate phosphatase (247 aa).

This sequence belongs to the ComB family. Requires Mg(2+) as cofactor.

It catalyses the reaction (2R)-O-phospho-3-sulfolactate + H2O = (2R)-3-sulfolactate + phosphate. The chain is Probable 2-phosphosulfolactate phosphatase from Clostridium perfringens (strain 13 / Type A).